The sequence spans 338 residues: tRNA-specific 2-thiouridylase MnmA (338 aa).

ATP contacts are provided by residues 6 to 13 (ALSGGVDS) and methionine 32. Residue cysteine 92 is the Nucleophile of the active site. Cysteine 92 and cysteine 186 are disulfide-bonded. Glycine 116 contacts ATP. Residues 134–136 (KDQ) form an interaction with tRNA region. Cysteine 186 acts as the Cysteine persulfide intermediate in catalysis. An interaction with tRNA region spans residues 288-289 (RY).

This sequence belongs to the MnmA/TRMU family.

Its subcellular location is the cytoplasm. The enzyme catalyses S-sulfanyl-L-cysteinyl-[protein] + uridine(34) in tRNA + AH2 + ATP = 2-thiouridine(34) in tRNA + L-cysteinyl-[protein] + A + AMP + diphosphate + H(+). Catalyzes the 2-thiolation of uridine at the wobble position (U34) of tRNA, leading to the formation of s(2)U34. This chain is tRNA-specific 2-thiouridylase MnmA, found in Campylobacter fetus subsp. fetus (strain 82-40).